A 123-amino-acid polypeptide reads, in one-letter code: Small ribosomal subunit protein uS12 (123 aa).

Asp-89 is subject to 3-methylthioaspartic acid.

The protein belongs to the universal ribosomal protein uS12 family. Part of the 30S ribosomal subunit. Contacts proteins S8 and S17. May interact with IF1 in the 30S initiation complex.

In terms of biological role, with S4 and S5 plays an important role in translational accuracy. Interacts with and stabilizes bases of the 16S rRNA that are involved in tRNA selection in the A site and with the mRNA backbone. Located at the interface of the 30S and 50S subunits, it traverses the body of the 30S subunit contacting proteins on the other side and probably holding the rRNA structure together. The combined cluster of proteins S8, S12 and S17 appears to hold together the shoulder and platform of the 30S subunit. This chain is Small ribosomal subunit protein uS12, found in Desulfovibrio desulfuricans (strain ATCC 27774 / DSM 6949 / MB).